Here is a 411-residue protein sequence, read N- to C-terminus: Putative competence-damage inducible protein (411 aa).

The protein belongs to the CinA family.

This Alkaliphilus metalliredigens (strain QYMF) protein is Putative competence-damage inducible protein.